A 171-amino-acid polypeptide reads, in one-letter code: 6,7-dimethyl-8-ribityllumazine synthase (171 aa).

Residues Phe24, 58 to 60 (ALE), and 82 to 84 (AVI) contribute to the 5-amino-6-(D-ribitylamino)uracil site. 87–88 (ET) contributes to the (2S)-2-hydroxy-3-oxobutyl phosphate binding site. His90 serves as the catalytic Proton donor. 5-amino-6-(D-ribitylamino)uracil is bound at residue Asn115. (2S)-2-hydroxy-3-oxobutyl phosphate is bound at residue Arg129. The interval 150 to 171 (ALDQLGDDEDEEEDEDDEEERA) is disordered. The span at 154–171 (LGDDEDEEEDEDDEEERA) shows a compositional bias: acidic residues.

The protein belongs to the DMRL synthase family.

It carries out the reaction (2S)-2-hydroxy-3-oxobutyl phosphate + 5-amino-6-(D-ribitylamino)uracil = 6,7-dimethyl-8-(1-D-ribityl)lumazine + phosphate + 2 H2O + H(+). Its pathway is cofactor biosynthesis; riboflavin biosynthesis; riboflavin from 2-hydroxy-3-oxobutyl phosphate and 5-amino-6-(D-ribitylamino)uracil: step 1/2. Functionally, catalyzes the formation of 6,7-dimethyl-8-ribityllumazine by condensation of 5-amino-6-(D-ribitylamino)uracil with 3,4-dihydroxy-2-butanone 4-phosphate. This is the penultimate step in the biosynthesis of riboflavin. The polypeptide is 6,7-dimethyl-8-ribityllumazine synthase (Burkholderia cenocepacia (strain HI2424)).